We begin with the raw amino-acid sequence, 492 residues long: Falcipain-3 (492 aa).

Residues 1–35 (MEYHMEYSPNEVIKQEREVFVGKEKSGSKFKRKRS) lie on the Cytoplasmic side of the membrane. Residues 1–242 (MEYHMEYSPN…LNLKTHGPFK (242 aa)) constitute a propeptide, activation peptide. The Bipartite vacuolar targeting signal 1 signature appears at 16–25 (EREVFVGKEK). A helical; Signal-anchor for type II membrane protein membrane pass occupies residues 36-56 (IFIVLTVSICFMFALMLFYFT). Topologically, residues 57 to 492 (RNENNKTLFT…GTEAYVPLLE (436 aa)) are lumenal. Residue Asn61 is glycosylated (N-linked (GlcNAc...) asparagine). The Bipartite vacuolar targeting signal 2 motif lies at 84 to 105 (KSESGKKFIVSKLEELISSYDK). An N-linked (GlcNAc...) asparagine glycan is attached at Asn129. A Nose motif; required for the correct folding of the mature form motif is present at residues 251 to 268 (EANYEDVIKKYKPADAKL). 4 disulfides stabilise this stretch: Cys290-Cys331, Cys324-Cys365, Cys350-Cys370, and Cys419-Cys480. The active site involves Cys293. His425 is a catalytic residue. The Arm motif; binds to host hemoglobin and required for the inhibitory interaction between the propeptide and the catalytic domain signature appears at 436-445 (DIYNEDTGRM). Asn455 is an active-site residue.

It belongs to the peptidase C1 family. Auto-cleavage occurs at acidic pH. The proenzyme is the predominant form in late trophozoites and both the pro and mature enzyme are present in schizonts.

Its subcellular location is the membrane. It is found in the vacuole. The protein localises to the cytoplasmic vesicle membrane. With respect to regulation, inhibited by cysteine protease inhibitor ICP. Functionally, cysteine protease which cleaves native host hemoglobin and globin in the food vacuole during the asexual blood stage. Preferentially cleaves substrates which have an arginine at the P1 position and a leucine at the P2 position. The polypeptide is Falcipain-3 (Plasmodium falciparum (isolate 3D7)).